A 560-amino-acid polypeptide reads, in one-letter code: RNA polymerase-associated protein C651.09c (560 aa).

Disordered stretches follow at residues 15–74 (DDSD…KNPY) and 128–207 (YMAQ…KVEQ). A compositionally biased stretch (basic and acidic residues) spans 148–171 (GKRDKLTELKKRRQERSARSVSER). A compositionally biased stretch (acidic residues) spans 180–195 (DYEEQNESEKSEEEEG). At S197 the chain carries Phosphoserine. Positions 214 to 345 (SANLYDLNAI…KLNDLRDMSK (132 aa)) constitute a Plus3 domain. Positions 387 to 456 (AGNAELVKEI…RRRLSAAATA (70 aa)) form a coiled coil. Positions 440 to 449 (EQRMNEERRR) are enriched in basic and acidic residues. Residues 440-486 (EQRMNEERRRLSAAATATPMSAPTSVLTGTSPQPSPSLSTSIMSTPK) are disordered. Over residues 451 to 480 (SAAATATPMSAPTSVLTGTSPQPSPSLSTS) the composition is skewed to low complexity. Phosphoserine occurs at positions 502 and 506.

As to quaternary structure, component of the PAF1 complex.

The protein resides in the nucleus. It is found in the nucleoplasm. Functionally, the PAF1 complex is a multifunctional complex. Involved in transcription initiation via genetic interactions with TATA-binding proteins. Involved in elongation. Also has a role in transcription-coupled histone modification. Important for TATA site selection by TBP. Directly or indirectly regulates the DNA-binding properties of the TATA box-binding protein, and the relative activities of different TATA elements. The protein is RNA polymerase-associated protein C651.09c of Schizosaccharomyces pombe (strain 972 / ATCC 24843) (Fission yeast).